We begin with the raw amino-acid sequence, 217 residues long: Protein-L-isoaspartate O-methyltransferase (217 aa).

Serine 62 is a catalytic residue.

It belongs to the methyltransferase superfamily. L-isoaspartyl/D-aspartyl protein methyltransferase family.

It is found in the cytoplasm. It catalyses the reaction [protein]-L-isoaspartate + S-adenosyl-L-methionine = [protein]-L-isoaspartate alpha-methyl ester + S-adenosyl-L-homocysteine. Its function is as follows. Catalyzes the methyl esterification of L-isoaspartyl residues in peptides and proteins that result from spontaneous decomposition of normal L-aspartyl and L-asparaginyl residues. It plays a role in the repair and/or degradation of damaged proteins. The protein is Protein-L-isoaspartate O-methyltransferase of Trichlorobacter lovleyi (strain ATCC BAA-1151 / DSM 17278 / SZ) (Geobacter lovleyi).